A 199-amino-acid polypeptide reads, in one-letter code: Ras-related protein Rab-7b (199 aa).

GTP contacts are provided by residues 15–22 (GALGVGKT), 34–40 (FEEYQTT), 63–67 (DTGGQ), 124–127 (NKID), and 154–155 (AK). 2 consecutive short sequence motifs (switch) follow at residues 28 to 41 (YVHKTFFEEYQTTL) and 67 to 82 (QERFRSMVSTFYKGSD). Residue S186 is modified to Phosphoserine. 2 S-geranylgeranyl cysteine lipidation sites follow: C198 and C199.

Belongs to the small GTPase superfamily. Rab family.

It is found in the late endosome. It localises to the lysosome. The protein resides in the golgi apparatus. The protein localises to the trans-Golgi network. Its subcellular location is the cytoplasmic vesicle. It is found in the phagosome. It localises to the phagosome membrane. Its function is as follows. Controls vesicular trafficking from endosomes to the trans-Golgi network (TGN). Acts as a negative regulator of TLR9 signaling and can suppress TLR9-triggered TNFA, IL6, and IFNB production in macrophages by promoting TLR9 lysosomal degradation. Also negatively regulates TLR4 signaling in macrophages by promoting lysosomal degradation of TLR4. Promotes megakaryocytic differentiation by increasing NF-kappa-B-dependent IL6 production and subsequently enhancing the association of STAT3 with GATA1. Not involved in the regulation of the EGF- and EGFR degradation pathway. This chain is Ras-related protein Rab-7b (Rab7b), found in Mus musculus (Mouse).